Consider the following 233-residue polypeptide: Orotidine 5'-phosphate decarboxylase (233 aa).

Substrate contacts are provided by residues Asp-11, Lys-34, 61–70 (DLKLHDIPNT), Thr-117, Arg-179, Gln-188, Gly-208, and Arg-209. Lys-63 functions as the Proton donor in the catalytic mechanism.

It belongs to the OMP decarboxylase family. Type 1 subfamily. Homodimer.

It catalyses the reaction orotidine 5'-phosphate + H(+) = UMP + CO2. The protein operates within pyrimidine metabolism; UMP biosynthesis via de novo pathway; UMP from orotate: step 2/2. Functionally, catalyzes the decarboxylation of orotidine 5'-monophosphate (OMP) to uridine 5'-monophosphate (UMP). This is Orotidine 5'-phosphate decarboxylase from Streptococcus pneumoniae serotype 4 (strain ATCC BAA-334 / TIGR4).